A 720-amino-acid polypeptide reads, in one-letter code: MAETLQKRHEQIMRKFDRAHSPQEAVREKCLEATRFARVPGGQWEGATAAGSELGKHFEKYPKFEINKISTELNRIISEYRHNRITVKFRPGDKTASEALANKLNGLFRADYEETDGGEACDNAFDDGSTGGFGCFRLTTNLVNALDPMDERQRICLEPIYDPARSVWFDPDAKKYDKSDAEWAFCMYSLSAEKYKAEYNKDPATLMSGIERSWDYDWYDVDVVYIAKYYEVKKESVDVVSFQNPLTSETVTYDSDQLELVEDELADIGFIEAARRTIKRRRVYVSVVDGEGFLEKAQRIPGEHIPLIPVYGKRWFIDDIERVEGHIAKAMDAQRLYNLQVSMLADSATQDTGSIPIVGKSQIKTLEKYWANRNKNRPAFLPLNEIVDKQGNIIAPPTPVGYTQPQPLNQAMAALLQQTGADIQEVTGSSQAMQPMPSNIAKETVNHLMHRSDMSSFIYLDNMAKSLKRAGEVWLSMAREVYGSDRQVRIVNADGTDDIALMSVVINDNQTGQVVAMNDLSSGRYDVTVDVGPSYTARRDATVSVLTNLLAGMLPQDPMRQVLQGIILDNMEGEGLDEFKEYNRKQLLTQGVVKPRNTEEEQMVAQMIQQAQQPNAELVAAQGVLMQGQAEVQKAKNEELAIQVKAFQAQTEARVAEAKMVQILASADSAKRAEIREALKMLHQFQKEQGDASRADAELILKATDTQHKQNRDAAKNHSI.

This sequence belongs to the p22likevirus portal protein family. As to quaternary structure, homododecamer.

Its subcellular location is the virion. Its function is as follows. Forms the portal vertex of the capsid. This portal plays critical roles in head assembly, genome packaging, neck/tail attachment, and genome ejection. Procapsid assembly may initiate with a nucleation complex composed of portal and scaffolding proteins. The portal protein multimerizes as a single ring-shaped homododecamer arranged around a central channel. The chain is Portal protein (19) from Acyrthosiphon pisum secondary endosymbiont phage 1 (Bacteriophage APSE-1).